The sequence spans 124 residues: Small ribosomal subunit protein uS12 (124 aa).

At D89 the chain carries 3-methylthioaspartic acid.

This sequence belongs to the universal ribosomal protein uS12 family. In terms of assembly, part of the 30S ribosomal subunit. Contacts proteins S8 and S17. May interact with IF1 in the 30S initiation complex.

With S4 and S5 plays an important role in translational accuracy. Functionally, interacts with and stabilizes bases of the 16S rRNA that are involved in tRNA selection in the A site and with the mRNA backbone. Located at the interface of the 30S and 50S subunits, it traverses the body of the 30S subunit contacting proteins on the other side and probably holding the rRNA structure together. The combined cluster of proteins S8, S12 and S17 appears to hold together the shoulder and platform of the 30S subunit. This is Small ribosomal subunit protein uS12 from Caldanaerobacter subterraneus subsp. tengcongensis (strain DSM 15242 / JCM 11007 / NBRC 100824 / MB4) (Thermoanaerobacter tengcongensis).